The chain runs to 264 residues: Short chain dehydrogenase/reductase AacuN (264 aa).

Residues isoleucine 24, aspartate 70, asparagine 97, and arginine 130 each contribute to the NADP(+) site. Active-site proton donor residues include serine 146, serine 147, and tyrosine 161. NADP(+)-binding residues include tyrosine 161, lysine 165, and threonine 196. The Lowers pKa of active site Tyr role is filled by lysine 165.

It belongs to the short-chain dehydrogenases/reductases (SDR) family.

The catalysed reaction is 3,8,9,10-tetrahydroxy-6-methyl-1,4-dihydroanthracen-1-one + NADPH + H(+) = (3R)-3,8,9,10-tetrahydroxy-6-methyl-1,2,3,4-tetrahydroanthracen-1-one + NADP(+). The protein operates within secondary metabolite biosynthesis. Its function is as follows. Atrochrysone carboxylic acid synthase; part of the gene cluster that mediates the biosynthesis of the tetrahydroxanthone dimer secalonic acid D. The pathway begins with the synthesis of atrochrysone thioester by the polyketide synthase AacuL. The atrochrysone carboxyl ACP thioesterase AacuM then breaks the thioester bond and releases the atrochrysone carboxylic acid from AacuL. Atrochrysone carboxylic acid is decarboxylated by the decarboxylase AacuI, and oxidized by the anthrone oxygenase AacuG to yield emodin. Emodin is then reduced to emodin hydroquinone by a yet unidentified oxidoreductase. A-ring reduction by the short chain dehydrogenase AacuN, dehydration by the scytalone dehydratase-like protein AacuK and probable spontaneous re-oxidation, results in overall deoxygenation to chrysophanol. Baeyer-Villiger oxidation by the Baeyer-Villiger monooxygenase (BVMO) AacuH then yields monodictyphenone. Monodictyphenone is transformed into compounds with the tetrahydroxanthone skeleton via methylesterification by the methyltransferase AacuQ, followed by the action of the flavin-dependent monooxygenase AacuC, the isomerase AacuP, and the short chain dehydrogenase/reductase AacuF or AacuD. AacuF and AacuD should accept the same compound as a substrate but perform the ketoreduction with a different stereoselectivity, thus yielding blennolides B and A, respectively. In the final step of the biosynthesis, the cytochrome P450 monooxygenase AacuE accepts blennolide B and/or blennolide A to conduct the dimerization reaction to furnish the tetrahydroxanthone dimers, secalonic acids D, B, and F. The protein is Short chain dehydrogenase/reductase AacuN of Aspergillus aculeatus (strain ATCC 16872 / CBS 172.66 / WB 5094).